Consider the following 186-residue polypeptide: ADP compounds hydrolase NudE (186 aa).

Residue E40 coordinates substrate. Residues 45–172 (TNREAVMIVP…DFNEARNVSA (128 aa)) enclose the Nudix hydrolase domain. The Nudix box motif lies at 80-101 (GLIDPGESVYEAANRELKEEVG). E95 and E99 together coordinate a divalent metal cation. S118 lines the substrate pocket.

The protein belongs to the Nudix hydrolase family. In terms of assembly, homodimer. Mg(2+) serves as cofactor.

The catalysed reaction is ADP-D-ribose + H2O = D-ribose 5-phosphate + AMP + 2 H(+). In terms of biological role, active on adenosine(5')triphospho(5')adenosine (Ap3A), ADP-ribose, NADH, adenosine(5')diphospho(5')adenosine (Ap2A). In Escherichia coli (strain K12), this protein is ADP compounds hydrolase NudE (nudE).